A 118-amino-acid chain; its full sequence is Ribonuclease P protein component (118 aa).

Belongs to the RnpA family. In terms of assembly, consists of a catalytic RNA component (M1 or rnpB) and a protein subunit.

The enzyme catalyses Endonucleolytic cleavage of RNA, removing 5'-extranucleotides from tRNA precursor.. Functionally, RNaseP catalyzes the removal of the 5'-leader sequence from pre-tRNA to produce the mature 5'-terminus. It can also cleave other RNA substrates such as 4.5S RNA. The protein component plays an auxiliary but essential role in vivo by binding to the 5'-leader sequence and broadening the substrate specificity of the ribozyme. This is Ribonuclease P protein component from Vibrio vulnificus (strain CMCP6).